Consider the following 117-residue polypeptide: Large ribosomal subunit protein uL22 (117 aa).

The protein belongs to the universal ribosomal protein uL22 family. In terms of assembly, part of the 50S ribosomal subunit.

In terms of biological role, this protein binds specifically to 23S rRNA; its binding is stimulated by other ribosomal proteins, e.g. L4, L17, and L20. It is important during the early stages of 50S assembly. It makes multiple contacts with different domains of the 23S rRNA in the assembled 50S subunit and ribosome. Its function is as follows. The globular domain of the protein is located near the polypeptide exit tunnel on the outside of the subunit, while an extended beta-hairpin is found that lines the wall of the exit tunnel in the center of the 70S ribosome. The chain is Large ribosomal subunit protein uL22 from Latilactobacillus sakei subsp. sakei (strain 23K) (Lactobacillus sakei subsp. sakei).